Here is a 264-residue protein sequence, read N- to C-terminus: Putative hydro-lyase Bpet2233 (264 aa).

It belongs to the D-glutamate cyclase family.

This is Putative hydro-lyase Bpet2233 from Bordetella petrii (strain ATCC BAA-461 / DSM 12804 / CCUG 43448).